Consider the following 277-residue polypeptide: Large ribosomal subunit protein uL2 (277 aa).

Residues 219–277 (TVRGSVMNPNDHPHGGGEGKAPVGRKAPSTPWGKPALGLKTRNKKAKSNKLIVRRRNEK) are disordered. A compositionally biased stretch (basic residues) spans 259-277 (TRNKKAKSNKLIVRRRNEK).

Belongs to the universal ribosomal protein uL2 family. As to quaternary structure, part of the 50S ribosomal subunit. Forms a bridge to the 30S subunit in the 70S ribosome.

Functionally, one of the primary rRNA binding proteins. Required for association of the 30S and 50S subunits to form the 70S ribosome, for tRNA binding and peptide bond formation. It has been suggested to have peptidyltransferase activity; this is somewhat controversial. Makes several contacts with the 16S rRNA in the 70S ribosome. In Streptococcus equi subsp. zooepidemicus (strain MGCS10565), this protein is Large ribosomal subunit protein uL2.